A 204-amino-acid chain; its full sequence is dTTP/UTP pyrophosphatase (204 aa).

The active-site Proton acceptor is D68.

It belongs to the Maf family. YhdE subfamily. It depends on a divalent metal cation as a cofactor.

The protein resides in the cytoplasm. The catalysed reaction is dTTP + H2O = dTMP + diphosphate + H(+). It catalyses the reaction UTP + H2O = UMP + diphosphate + H(+). Its function is as follows. Nucleoside triphosphate pyrophosphatase that hydrolyzes dTTP and UTP. May have a dual role in cell division arrest and in preventing the incorporation of modified nucleotides into cellular nucleic acids. The chain is dTTP/UTP pyrophosphatase from Thermotoga petrophila (strain ATCC BAA-488 / DSM 13995 / JCM 10881 / RKU-1).